Consider the following 87-residue polypeptide: Small ribosomal subunit protein bS18 (87 aa).

It belongs to the bacterial ribosomal protein bS18 family. As to quaternary structure, part of the 30S ribosomal subunit. Forms a tight heterodimer with protein bS6.

In terms of biological role, binds as a heterodimer with protein bS6 to the central domain of the 16S rRNA, where it helps stabilize the platform of the 30S subunit. This Sulfurovum sp. (strain NBC37-1) protein is Small ribosomal subunit protein bS18.